We begin with the raw amino-acid sequence, 974 residues long: Kinesin-like protein KIN-7A (974 aa).

A disordered region spans residues 1–29; the sequence is MTIKTPGTPVSKMDRTPAVTPGGSSRSRE. Positions 31–353 constitute a Kinesin motor domain; the sequence is KIVVTVRLRP…LYFANRAKEV (323 aa). An ATP-binding site is contributed by 117-124; it reads GQTSSGKT. Coiled-coil stretches lie at residues 362 to 435 and 565 to 603; these read VVSD…KGLN and SANL…VMSL. Disordered stretches follow at residues 605 to 649 and 663 to 713; these read SNIS…PCSP and NKAP…SSVN. Positions 616 to 628 are enriched in basic residues; the sequence is TKNHHHQSKKKKL. 2 stretches are compositionally biased toward polar residues: residues 638–649 and 666–682; these read NRQNFLKSPCSP and PQEN…TPQG. The span at 683–693 shows a compositional bias: basic and acidic residues; that stretch reads SEKETPQKGEE.

The protein belongs to the TRAFAC class myosin-kinesin ATPase superfamily. Kinesin family. KIN-7 subfamily. Phosphorylated at Thr-145, Thr-687 and Thr-703 by CDKAs and CDKBs. Phosphorylated NACK1 fails to mediate cytokinesis. In terms of tissue distribution, expressed in roots, flowers, pollen mother cells and embryos.

Its subcellular location is the cytoplasm. The protein localises to the cytoskeleton. It localises to the phragmoplast. Functionally, probable plus end-directed motor protein that functions in the NACK-PQR (ANP1-MKK6-MPK4) MAP kinase signaling pathway, which is essential for somatic cell cytokinesis, especially for the cell-plate formation and its expansion. Regulates the activity and the localization of ANP1, probably by association through the non-catalytic region of the kinase. Functionally redundant with NACK2 and essential to promote the progression of cytokinesis and for cellularization (formation of the cell plate) during microgametogenesis and megagametogenesis. The protein is Kinesin-like protein KIN-7A of Arabidopsis thaliana (Mouse-ear cress).